The chain runs to 110 residues: MTELMKIAALFAVTALAEIVGCYLPWLVLKGGRPVWLLVPAALSLALFAWLLTLHPSAAGRTYAAYGGVYIAVALIWLRVVDGVALTRWDAAGAVLALGGMAVIALQPRA.

4 helical membrane passes run 9 to 29 (ALFAVTALAEIVGCYLPWLVL), 34 to 54 (PVWLLVPAALSLALFAWLLTL), 66 to 86 (YGGVYIAVALIWLRVVDGVAL), and 88 to 108 (RWDAAGAVLALGGMAVIALQP).

This sequence belongs to the UPF0060 family.

Its subcellular location is the cell inner membrane. The polypeptide is UPF0060 membrane protein Bamb_1160 (Burkholderia ambifaria (strain ATCC BAA-244 / DSM 16087 / CCUG 44356 / LMG 19182 / AMMD) (Burkholderia cepacia (strain AMMD))).